The primary structure comprises 405 residues: Putative polysaccharide ligase RT0347 (405 aa).

10 helical membrane passes run 23–43 (IAATVLFFLLIIVITELISFI), 77–97 (LFIAWCFISCLFTIHPINSLV), 120–140 (ILYLKNSLILGIITAILLFFI), 156–178 (FGLYMLDRGCALLSITTWVVIII), 201–221 (ISDSLASFVGFSIGGIIFILA), 227–247 (IFFKLITISLITGSLLFPIIA), 270–290 (LFIWHFVANKIIIKPILGYGF), 322–342 (ILQITLELGILGLALFLCLVY), 353–375 (ISNFRAASYSCFINYYIIGMISY), and 377–397 (IWQTWWILSGIWILVLMKLLV).

This sequence belongs to the O-antigen ligase family.

The protein localises to the membrane. In Rickettsia typhi (strain ATCC VR-144 / Wilmington), this protein is Putative polysaccharide ligase RT0347.